Reading from the N-terminus, the 401-residue chain is Type I restriction enzyme EcoprrI specificity subunit (401 aa).

This sequence belongs to the type-I restriction system S methylase family. The type I restriction/modification system is composed of three polypeptides R, M and S; the restriction enzyme has stoichiometry R(2)M(2)S(1) while the methyltransferase is M(2)S(1).

In terms of biological role, the specificity (S) subunit of a type I restriction enzyme; this subunit dictates DNA sequence specificity. The M and S subunits together form a methyltransferase (MTase) that methylates two adenine residues of the sequence 5'-CCAN(7)ATGC-3'. In the presence of the R subunit the complex can also act as an endonuclease, binding to the same target sequence but cutting the DNA some distance from this site. Whether the DNA is cut or modified depends on the methylation state of the target sequence. When the target site is unmodified, the DNA is cut. When the target site is hemimethylated, the complex acts as a maintenance MTase modifying the DNA so that both strands become methylated. After locating a non-methylated recognition site, the enzyme complex serves as a molecular motor that translocates DNA in an ATP-dependent manner until a collision occurs that triggers cleavage. The polypeptide is Type I restriction enzyme EcoprrI specificity subunit (prrB) (Escherichia coli).